The following is a 473-amino-acid chain: Cannabinoid receptor 1 (473 aa).

Over 1 to 118 (MKSILDGLAD…CFMILTASQQ (118 aa)) the chain is Extracellular. The required for mitochondrial localization stretch occupies residues 2–23 (KSILDGLADTTFRTITTDLLYM). 2 N-linked (GlcNAc...) asparagine glycosylation sites follow: asparagine 79 and asparagine 85. A helical transmembrane segment spans residues 119-144 (LIIAVLSLTLGTFTVLENFLVLCVIL). The Cytoplasmic segment spans residues 145 to 156 (QSRTLRCRPSYH). A helical membrane pass occupies residues 157-177 (FIGSLAVADLLGSVIFVYSFL). At 178-189 (DFHVFHRKDSSN) the chain is on the extracellular side. The chain crosses the membrane as a helical span at residues 190-214 (VFLFKLGGVTASFTASVGSLFLTAI). Over 215 to 234 (DRYISIHRPLAYKRIVTRTK) the chain is Cytoplasmic. A helical transmembrane segment spans residues 235–257 (AVIAFCVMWTIAIIIAVLPLLGW). Residues 258 to 275 (NCKKLKSVCSDIFPLIDE) lie on the Extracellular side of the membrane. The helical transmembrane segment at 276–301 (NYLMFWIGVTSILLLFIVYAYVYILW) threads the bilayer. Over 302–346 (KAHSHAVRMLQRGTQKSIIIHTSEDGKVQITRPEQTRMDIRLAKT) the chain is Cytoplasmic. Residues 347-367 (LVLILVVLIICWGPLLAIMVY) form a helical membrane-spanning segment. The Extracellular portion of the chain corresponds to 368-379 (DVFGKMNNPIKT). The helical transmembrane segment at 380–401 (VFAFCSMLCLMDSTVNPIIYAL) threads the bilayer. At 402 to 473 (RSQDLRHAFL…VSTETSGEAV (72 aa)) the chain is on the cytoplasmic side. Cysteine 417 is lipidated: S-palmitoyl cysteine.

The protein belongs to the G-protein coupled receptor 1 family. In terms of processing, palmitoylation at Cys-417 is important for recruitment at both plasma membrane and lipid rafts and association with G protein alpha subunits.

The protein localises to the cell membrane. The protein resides in the mitochondrion outer membrane. It localises to the cell projection. Its subcellular location is the axon. It is found in the presynapse. Its activity is regulated as follows. Hemopressin, a peptide derived from hemoglobin subunit alpha (HBA1 and/or HBA2), acts as an antagonist peptide: hemopressin-binding efficiently blocks cannabinoid receptor CNR1 and subsequent signaling. G-protein coupled receptor for cannabinoids. Mediates many cannabinoid-induced effects in the central nervous system (CNS), as well as in peripheral tissues. Regulates cellular respiration and energy production in response to cannabinoids. Signaling typically involves reduction in cyclic AMP. In Taricha granulosa (Roughskin newt), this protein is Cannabinoid receptor 1 (CNR1).